The following is a 368-amino-acid chain: tRNA(Met) cytidine acetate ligase (368 aa).

ATP is bound by residues 7–20, G96, N152, and R175; that span reads IAEF…HKYL.

It belongs to the TmcAL family.

The protein resides in the cytoplasm. It carries out the reaction cytidine(34) in elongator tRNA(Met) + acetate + ATP = N(4)-acetylcytidine(34) in elongator tRNA(Met) + AMP + diphosphate. Catalyzes the formation of N(4)-acetylcytidine (ac(4)C) at the wobble position of elongator tRNA(Met), using acetate and ATP as substrates. First activates an acetate ion to form acetyladenylate (Ac-AMP) and then transfers the acetyl group to tRNA to form ac(4)C34. In Streptococcus pyogenes serotype M3 (strain SSI-1), this protein is tRNA(Met) cytidine acetate ligase.